Consider the following 280-residue polypeptide: RNA polymerase II holoenzyme cyclin-like subunit (280 aa).

A Cyclin N-terminal domain is found at 23 to 150 (ERRKGLEDIF…LIEELGTYLV (128 aa)).

The protein belongs to the cyclin family. Cyclin C subfamily. In terms of assembly, component of the SRB8-11 complex, a regulatory module of the Mediator complex.

It localises to the nucleus. In terms of biological role, component of the SRB8-11 complex. The SRB8-11 complex is a regulatory module of the Mediator complex which is itself involved in regulation of basal and activated RNA polymerase II-dependent transcription. The SRB8-11 complex may be involved in the transcriptional repression of a subset of genes regulated by Mediator. It may inhibit the association of the Mediator complex with RNA polymerase II to form the holoenzyme complex. The SRB8-11 complex phosphorylates the C-terminal domain (CTD) of the largest subunit of RNA polymerase II. The polypeptide is RNA polymerase II holoenzyme cyclin-like subunit (SSN8) (Yarrowia lipolytica (strain CLIB 122 / E 150) (Yeast)).